The primary structure comprises 591 residues: Laccase (591 aa).

The first 20 residues, 1–20 (MPSFFRALFSGLIASQLSWA), serve as a signal peptide directing secretion. Plastocyanin-like domains follow at residues 66 to 189 (VRQY…IQID) and 198 to 356 (IDLG…HPTN). N-linked (GlcNAc...) asparagine glycosylation occurs at Asn-121. His-126, His-128, His-171, and His-173 together coordinate Cu cation. 2 cysteine pairs are disulfide-bonded: Cys-147/Cys-571 and Cys-332/Cys-366. 4 N-linked (GlcNAc...) asparagine glycosylation sites follow: Asn-234, Asn-242, Asn-265, and Asn-323. Residues Asn-407 and Asn-425 are each glycosylated (N-linked (GlcNAc...) asparagine). The Plastocyanin-like 3 domain occupies 416 to 551 (GHPITQYVIN…AGLGNTFLEQ (136 aa)). Positions 463, 466, 468, 533, 534, 535, and 539 each coordinate Cu cation.

It belongs to the multicopper oxidase family. It depends on Cu cation as a cofactor.

The protein localises to the secreted. The catalysed reaction is 4 hydroquinone + O2 = 4 benzosemiquinone + 2 H2O. Lignin degradation and detoxification of lignin-derived products. This chain is Laccase (LAC-1), found in Cryphonectria parasitica (Chestnut blight fungus).